A 55-amino-acid chain; its full sequence is Large ribosomal subunit protein bL32 (55 aa).

The interval M1–L27 is disordered.

This sequence belongs to the bacterial ribosomal protein bL32 family.

The polypeptide is Large ribosomal subunit protein bL32 (Yersinia enterocolitica serotype O:8 / biotype 1B (strain NCTC 13174 / 8081)).